A 196-amino-acid polypeptide reads, in one-letter code: Beta-crystallin A4 (196 aa).

Threonine 2 bears the N-acetylthreonine mark. Positions 2–11 (TLQCTKSAGH) are N-terminal arm. Beta/gamma crystallin 'Greek key' domains follow at residues 12 to 51 (WRMV…KVLS) and 52 to 98 (GAWV…RPVA). The interval 99–104 (CANHRD) is connecting peptide. 2 Beta/gamma crystallin 'Greek key' domains span residues 105 to 146 (SRLT…HVQS) and 147 to 195 (GAWV…RRIQ).

This sequence belongs to the beta/gamma-crystallin family. Homo/heterodimer, or complexes of higher-order. The structure of beta-crystallin oligomers seems to be stabilized through interactions between the N-terminal arms.

Its function is as follows. Crystallins are the dominant structural components of the vertebrate eye lens. In Mus musculus (Mouse), this protein is Beta-crystallin A4 (Cryba4).